Consider the following 209-residue polypeptide: Large ribosomal subunit protein bL21m (209 aa).

Residues 1-43 (MAAAIAASALPGAFGRLVSVCSRSILASQGSGSASLWSASRRF) constitute a mitochondrion transit peptide.

This sequence belongs to the bacterial ribosomal protein bL21 family. In terms of assembly, component of the mitochondrial ribosome large subunit (39S) which comprises a 16S rRNA and about 50 distinct proteins.

The protein localises to the mitochondrion. This is Large ribosomal subunit protein bL21m (Mrpl21) from Mus musculus (Mouse).